Here is a 158-residue protein sequence, read N- to C-terminus: NAD(P)H-quinone oxidoreductase subunit J, chloroplastic (158 aa).

Belongs to the complex I 30 kDa subunit family. NDH is composed of at least 16 different subunits, 5 of which are encoded in the nucleus.

The protein resides in the plastid. The protein localises to the chloroplast thylakoid membrane. It catalyses the reaction a plastoquinone + NADH + (n+1) H(+)(in) = a plastoquinol + NAD(+) + n H(+)(out). The enzyme catalyses a plastoquinone + NADPH + (n+1) H(+)(in) = a plastoquinol + NADP(+) + n H(+)(out). Its function is as follows. NDH shuttles electrons from NAD(P)H:plastoquinone, via FMN and iron-sulfur (Fe-S) centers, to quinones in the photosynthetic chain and possibly in a chloroplast respiratory chain. The immediate electron acceptor for the enzyme in this species is believed to be plastoquinone. Couples the redox reaction to proton translocation, and thus conserves the redox energy in a proton gradient. This chain is NAD(P)H-quinone oxidoreductase subunit J, chloroplastic, found in Angiopteris evecta (Mule's foot fern).